A 136-amino-acid chain; its full sequence is Non-structural protein 1 (136 aa).

This sequence belongs to the pneumovirus non-structural protein 1 family. In terms of assembly, monomer. Homomultimer. Heteromultimer with NS2. Interacts with the matrix protein M. Interacts with host ELOC and CUL2; this interaction allows NS1 to form an active E3 ligase with ELOC and CUL2. Interacts with host IRF3; this interaction leads to the disrupted association of IRF3 with CREBBP and thus reduced binding of IRF3 to the IFN-beta promoter. Interacts with host MAVS; this interaction prevents MAVS binding to RIGI and inhibits signaling pathway leading to interferon production. Interacts with host TRIM25 (via SPRY domain); this interaction suppresses RIGI ubiquitination and results in decreased interaction between RIGI and MAVS.

Its subcellular location is the host cytoplasm. It localises to the host mitochondrion. It is found in the host nucleus. Its function is as follows. Plays a major role in antagonizing the type I IFN-mediated antiviral response by degrading or inhibiting multiple cellular factors required for either IFN induction or response pathways. Acts cooperatively with NS2 to repress activation and nuclear translocation of host IFN-regulatory factor IRF3. Also disrupts the association of IRF3 with CREBBP. Interacts with host mitochondrial-associated membrane (MAM) MAVS and prevents the interaction with RIGI. Interacts with TRIM25 to suppress TRIM25-mediated RIGI ubiquitination and thereby RIGI-MAVS interaction. Together with NS2, participates in the proteasomal degradation of host STAT2, IRF3, IRF7, TBK1 and RIGI through a NS-degradasome involving CUL2 and Elongin-C. The degradasome requires an intact mitochondrial MAVS. Decreases the levels of host TRAF3 and IKBKE/IKK-epsilon. As functions other than disruptions of the type I IFN-mediated antiviral signaling pathways, induces host SOCS1 and SOCS3 expression. Suppresses premature apoptosis by an NF-kappa-B-dependent, interferon-independent mechanism and thus facilitates virus growth. Additionally, NS1 may serve some inhibitory role in viral transcription and RNA replication. Suppresses proliferation and activation of host CD103+ CD8+ cytotoxic T-lymphocytes and Th17 helper T-lymphocytes. This is Non-structural protein 1 (1C) from Ovis aries (Sheep).